We begin with the raw amino-acid sequence, 172 residues long: Ribosome maturation factor RimM (172 aa).

Positions 93–167 (DEHEFYYHEI…RVVITPIPGM (75 aa)) constitute a PRC barrel domain.

This sequence belongs to the RimM family. In terms of assembly, binds ribosomal protein uS19.

The protein localises to the cytoplasm. Its function is as follows. An accessory protein needed during the final step in the assembly of 30S ribosomal subunit, possibly for assembly of the head region. Essential for efficient processing of 16S rRNA. May be needed both before and after RbfA during the maturation of 16S rRNA. It has affinity for free ribosomal 30S subunits but not for 70S ribosomes. The protein is Ribosome maturation factor RimM of Exiguobacterium sp. (strain ATCC BAA-1283 / AT1b).